Reading from the N-terminus, the 97-residue chain is Large ribosomal subunit protein bL28 (97 aa).

The segment at 1–20 is disordered; it reads MSRRCELTAKGPQVGHKVSH.

Belongs to the bacterial ribosomal protein bL28 family.

In Afipia carboxidovorans (strain ATCC 49405 / DSM 1227 / KCTC 32145 / OM5) (Oligotropha carboxidovorans), this protein is Large ribosomal subunit protein bL28.